A 212-amino-acid polypeptide reads, in one-letter code: Thymidylate kinase (212 aa).

10–17 (GLEGAGKT) is a binding site for ATP.

The protein belongs to the thymidylate kinase family.

It carries out the reaction dTMP + ATP = dTDP + ADP. Its function is as follows. Phosphorylation of dTMP to form dTDP in both de novo and salvage pathways of dTTP synthesis. The sequence is that of Thymidylate kinase from Photorhabdus laumondii subsp. laumondii (strain DSM 15139 / CIP 105565 / TT01) (Photorhabdus luminescens subsp. laumondii).